Reading from the N-terminus, the 464-residue chain is Properdin (464 aa).

Positions methionine 1–glycine 22 are cleaved as a signal peptide. TSP type-1 domains lie at aspartate 24 to arginine 72, serine 73 to proline 130, methionine 132 to proline 187, histidine 189 to proline 251, alanine 253 to proline 309, asparagine 311 to isoleucine 372, and lysine 374 to lysine 457. Disulfide bonds link cysteine 28/cysteine 52, cysteine 39/cysteine 68, and cysteine 53/cysteine 71. Residues tryptophan 79 and tryptophan 82 are each glycosylated (C-linked (Man) tryptophan). 7 disulfides stabilise this stretch: cysteine 85–cysteine 123, cysteine 89–cysteine 129, cysteine 100–cysteine 107, cysteine 128–cysteine 166, cysteine 144–cysteine 180, cysteine 148–cysteine 186, and cysteine 159–cysteine 170. 3 C-linked (Man) tryptophan glycosylation sites follow: tryptophan 135, tryptophan 138, and tryptophan 141. O-linked (Fuc...) threonine glycosylation occurs at threonine 147. Residues tryptophan 192, tryptophan 195, and tryptophan 198 are each glycosylated (C-linked (Man) tryptophan). Intrachain disulfides connect cysteine 201-cysteine 244, cysteine 205-cysteine 250, and cysteine 220-cysteine 234. Serine 204 carries an O-linked (Fuc...) serine glycan. Tryptophan 256 and tryptophan 259 each carry a C-linked (Man) tryptophan glycan. 3 cysteine pairs are disulfide-bonded: cysteine 265-cysteine 302, cysteine 269-cysteine 308, and cysteine 280-cysteine 292. An O-linked (Fuc...) threonine glycan is attached at threonine 268. 2 C-linked (Man) tryptophan glycosylation sites follow: tryptophan 317 and tryptophan 320. Intrachain disulfides connect cysteine 323-cysteine 365, cysteine 332-cysteine 371, and cysteine 345-cysteine 355. Positions glycine 346–proline 354 are interaction with Complement C3 beta chain. C-linked (Man) tryptophan glycosylation is found at tryptophan 377, tryptophan 380, and tryptophan 383. Intrachain disulfides connect cysteine 386-cysteine 450, cysteine 390-cysteine 456, and cysteine 402-cysteine 434. The N-linked (GlcNAc...) asparagine glycan is linked to asparagine 423.

As to quaternary structure, in plasma, properdin exists as dimers, trimers or tetramers in the relative proportions of 26:54:20. Interacts with the pro-C3-convertase enzyme complex (C3b-Bb) comprised of Complement C3 beta chain (C3b) and the Complement factor B Bb fragment (Bb), where it binds (via its TSP type-1 5 domain) with C3b and Bb. This interaction stabilizes the complex and allows it to become the active C3-convertase enzyme complex (C3b-Bb-FP). Interacts with C3b. Interacts with CFB.

It localises to the secreted. Its function is as follows. A positive regulator of the alternate pathway of complement. It binds to and stabilizes the C3- and C5-convertase enzyme complexes. Inhibits CFI-CFH mediated degradation of Inhibits CFI-CFH mediated degradation of Complement C3 beta chain (C3b). In Mus musculus (Mouse), this protein is Properdin (Cfp).